A 211-amino-acid polypeptide reads, in one-letter code: WW domain-containing protein WWM1 (211 aa).

A WW domain is found at 9–43 (PQVPSGWKAVFDDEYQTWYYVDLSTNSSQWEPPRG). The segment at 32 to 116 (STNSSQWEPP…QRYYPQQAPM (85 aa)) is disordered. Glycyl lysine isopeptide (Lys-Gly) (interchain with G-Cter in ubiquitin) cross-links involve residues K50 and K60. S75 carries the phosphoserine modification. T78 carries the phosphothreonine modification. The span at 80 to 116 (QVQAGAQAQQPRYYQPQQPQYPQYPQQQRYYPQQAPM) shows a compositional bias: low complexity.

Interacts with metacaspase MCA1.

Its subcellular location is the cytoplasm. It is found in the nucleus. The protein resides in the mitochondrion. Its function is as follows. Involved in apoptosis. May play a role in nuclear function controlling cellular proliferation coupled to mitochondrial biogenesis. Causes impaired growth when overexpressed. The protein is WW domain-containing protein WWM1 (WWM1) of Saccharomyces cerevisiae (strain ATCC 204508 / S288c) (Baker's yeast).